Consider the following 254-residue polypeptide: 3-deoxy-manno-octulosonate cytidylyltransferase (254 aa).

This sequence belongs to the KdsB family.

It is found in the cytoplasm. The enzyme catalyses 3-deoxy-alpha-D-manno-oct-2-ulosonate + CTP = CMP-3-deoxy-beta-D-manno-octulosonate + diphosphate. It functions in the pathway nucleotide-sugar biosynthesis; CMP-3-deoxy-D-manno-octulosonate biosynthesis; CMP-3-deoxy-D-manno-octulosonate from 3-deoxy-D-manno-octulosonate and CTP: step 1/1. Its pathway is bacterial outer membrane biogenesis; lipopolysaccharide biosynthesis. Activates KDO (a required 8-carbon sugar) for incorporation into bacterial lipopolysaccharide in Gram-negative bacteria. The sequence is that of 3-deoxy-manno-octulosonate cytidylyltransferase from Chlamydia trachomatis serovar L2 (strain ATCC VR-902B / DSM 19102 / 434/Bu).